A 210-amino-acid chain; its full sequence is Chaperone protein TorD (210 aa).

Belongs to the TorD/DmsD family. TorD subfamily.

It localises to the cytoplasm. Its function is as follows. Involved in the biogenesis of TorA. Acts on TorA before the insertion of the molybdenum cofactor and, as a result, probably favors a conformation of the apoenzyme that is competent for acquiring the cofactor. The polypeptide is Chaperone protein TorD (Salmonella arizonae (strain ATCC BAA-731 / CDC346-86 / RSK2980)).